The primary structure comprises 360 residues: Phospho-N-acetylmuramoyl-pentapeptide-transferase (360 aa).

10 helical membrane passes run alanine 26–asparagine 46, glycine 70–tryptophan 90, tyrosine 97–tyrosine 117, tyrosine 134–isoleucine 154, glycine 167–phenylalanine 187, glycine 199–valine 219, alanine 236–phenylalanine 256, valine 263–isoleucine 283, isoleucine 288–valine 308, and valine 338–lysine 358.

The protein belongs to the glycosyltransferase 4 family. MraY subfamily. Requires Mg(2+) as cofactor.

It localises to the cell inner membrane. The catalysed reaction is UDP-N-acetyl-alpha-D-muramoyl-L-alanyl-gamma-D-glutamyl-meso-2,6-diaminopimeloyl-D-alanyl-D-alanine + di-trans,octa-cis-undecaprenyl phosphate = di-trans,octa-cis-undecaprenyl diphospho-N-acetyl-alpha-D-muramoyl-L-alanyl-D-glutamyl-meso-2,6-diaminopimeloyl-D-alanyl-D-alanine + UMP. Its pathway is cell wall biogenesis; peptidoglycan biosynthesis. Its function is as follows. Catalyzes the initial step of the lipid cycle reactions in the biosynthesis of the cell wall peptidoglycan: transfers peptidoglycan precursor phospho-MurNAc-pentapeptide from UDP-MurNAc-pentapeptide onto the lipid carrier undecaprenyl phosphate, yielding undecaprenyl-pyrophosphoryl-MurNAc-pentapeptide, known as lipid I. The sequence is that of Phospho-N-acetylmuramoyl-pentapeptide-transferase from Saccharophagus degradans (strain 2-40 / ATCC 43961 / DSM 17024).